Consider the following 710-residue polypeptide: Forkhead box protein P2 (710 aa).

Polar residues predominate over residues 1-28 (MMQESATETISNSSMNQNGMSTLSSQLD). Disordered regions lie at residues 1–44 (MMQE…SSEV) and 272–334 (HSQE…TGAS). Positions 273–283 (SQEDNGIKHGG) are enriched in basic and acidic residues. Positions 287–300 (TTNNSSSTTSSTTS) are enriched in low complexity. Positions 310 to 319 (SIVNGQSSVL) are enriched in polar residues. The segment covering 321 to 332 (ARRDSSSHEETG) has biased composition (basic and acidic residues). The C2H2-type zinc-finger motif lies at 343 to 366 (CKWPGCESICEDFGQFLKHLNNEH). A leucine-zipper region spans residues 383–404 (VQQLEIQLSKERERLQAMMTHL). Positions 417–421 (PLNLV) are CTBP1-binding. Over residues 433 to 454 (TSPQSLPQTPTTPTAPVTPITQ) the composition is skewed to low complexity. Positions 433 to 460 (TSPQSLPQTPTTPTAPVTPITQGPSVIT) are disordered. The segment at residues 499-589 (RPPFTYATLI…SQKITGSPTL (91 aa)) is a DNA-binding region (fork-head). Disordered stretches follow at residues 644 to 663 (LDHI…QPHI) and 673 to 710 (VIAE…EDLE). Over residues 694–710 (LEDDREIEEEPLSEDLE) the composition is skewed to acidic residues.

As to quaternary structure, forms homodimers and heterodimers with FOXP1 and FOXP4. Dimerization is required for DNA-binding. Interacts with CTBP1. Interacts with FOXP1. Interacts with TBR1. Interacts with ZMYM2.

It is found in the nucleus. In terms of biological role, transcriptional repressor that may play a role in the specification and differentiation of lung epithelium. May also play a role in developing neural, gastrointestinal and cardiovascular tissues. Can act with CTBP1 to synergistically repress transcription but CTPBP1 is not essential. Plays a role in synapse formation by regulating SRPX2 levels. This chain is Forkhead box protein P2 (Foxp2), found in Rattus norvegicus (Rat).